Consider the following 156-residue polypeptide: MPRPKCCRTITGEPPCRAFTPAGTTGPAPSRVVLSEDEFEAVRLADFEGLYQEEAAERMGVSRQTFGRIVGAARAKIARVLVEGLALSIGGGGGTGIAPSRSYMCRLCRHTWDMPSETDSPAECPACRGRNLFRCGASLETAASGRECCPRERKAT.

Belongs to the UPF0251 family.

The sequence is that of UPF0251 protein Sfum_2819 from Syntrophobacter fumaroxidans (strain DSM 10017 / MPOB).